The chain runs to 554 residues: Glucose-6-phosphate isomerase (554 aa).

The Proton donor role is filled by Glu359. Active-site residues include His390 and Lys518.

This sequence belongs to the GPI family.

It is found in the cytoplasm. It catalyses the reaction alpha-D-glucose 6-phosphate = beta-D-fructose 6-phosphate. Its pathway is carbohydrate biosynthesis; gluconeogenesis. The protein operates within carbohydrate degradation; glycolysis; D-glyceraldehyde 3-phosphate and glycerone phosphate from D-glucose: step 2/4. Catalyzes the reversible isomerization of glucose-6-phosphate to fructose-6-phosphate. The sequence is that of Glucose-6-phosphate isomerase from Stutzerimonas stutzeri (strain A1501) (Pseudomonas stutzeri).